A 431-amino-acid chain; its full sequence is MLNDHDRIFTNIYGMHDRSLKGAMARGHWDGTAAILGNGRDWIIEQVKASGLRGRGGAGFPTGLKWSFMPKQSDGRPSFLVINADESEPGTCKDREIMRHDPHTLIEGALIAGFAMGARAAYIYIRGEYVREKEALQAAIDECYEAGLIGKNACRSDYDFDVYLHHGAGAYICGEETALLESLEGKKGMPRMKPPFPAGSGLYGCPTTVNNVESIAVVPTILRRGGAWFAGIGRPNNTGVKLFAMSGHVNTPCVVEEAMSISMKELIEKHGGGVRGGWKNLKAVIPGGASCPVIPAHLCEDAIMDYDGMREKQSSFGTACLIVMDQQTDIIKAIARLSKFFKHESCGQCTPCREGTSWMWRVMERLVTGEAEVEEIDMLFSVTKQVEGHTICALGDAAAWPIQGLIRHYREEIEDRIKARKTGRMGAMAAE.

54-63 (GRGGAGFPTG) is a binding site for NAD(+). 167-214 (GAGAYICGEETALLESLEGKKGMPRMKPPFPAGSGLYGCPTTVNNVES) provides a ligand contact to FMN. Residues Cys-346, Cys-349, Cys-352, and Cys-392 each contribute to the [4Fe-4S] cluster site.

It belongs to the complex I 51 kDa subunit family. FMN is required as a cofactor. It depends on [4Fe-4S] cluster as a cofactor.

The enzyme catalyses a quinone + NADH + 5 H(+)(in) = a quinol + NAD(+) + 4 H(+)(out). Functionally, NDH-1 shuttles electrons from NADH, via FMN and iron-sulfur (Fe-S) centers, to quinones in the respiratory chain. The immediate electron acceptor for the enzyme in this species is believed to be ubiquinone. Couples the redox reaction to proton translocation (for every two electrons transferred, four hydrogen ions are translocated across the cytoplasmic membrane), and thus conserves the redox energy in a proton gradient. The chain is NADH-quinone oxidoreductase subunit F (nuoF) from Rhodobacter capsulatus (Rhodopseudomonas capsulata).